The sequence spans 390 residues: MRADAPATDGLDEAARARILAKAALFAPPSNELADGRRDLVGLSREELAAAMAEIGEQPFRAKQLWHWIYHQGVTDFAAMANIAKPLRAKLAERFAIGRPEVAADHLSADETRKMLFRFRDHEAVETVYIPDVTEDRGAVCLSSQVGCTLSCRFCHTGTQRLTRNLSAAEIVGQFMAMRDAYGEWPSPKGETPRLLSTIVLMGMGEPLYNYENVAKAMKIVMDGEGIGLSRRRITLSTSGVVPMMDRAGAELGVNLAVSLHAVTDDVRDVIVPLNRKYNIAELIAACRRYPGASNARRITFEYVMLKGINDSEADARRLVELIDGIPAKVNLIPFNPWPGSTYETSSGNAIRRFANIVMDAGYAAPVRTPRGQDILAACGQLKSKVAGAA.

Glu-126 functions as the Proton acceptor in the catalytic mechanism. Residues Thr-134–Asp-374 enclose the Radical SAM core domain. The cysteines at positions 141 and 379 are disulfide-linked. [4Fe-4S] cluster is bound by residues Cys-148, Cys-152, and Cys-155. S-adenosyl-L-methionine contacts are provided by residues Gly-205–Glu-206, Ser-237, Ser-259–His-261, and Asn-336. Residue Cys-379 is the S-methylcysteine intermediate of the active site.

This sequence belongs to the radical SAM superfamily. RlmN family. Requires [4Fe-4S] cluster as cofactor.

It is found in the cytoplasm. The catalysed reaction is adenosine(2503) in 23S rRNA + 2 reduced [2Fe-2S]-[ferredoxin] + 2 S-adenosyl-L-methionine = 2-methyladenosine(2503) in 23S rRNA + 5'-deoxyadenosine + L-methionine + 2 oxidized [2Fe-2S]-[ferredoxin] + S-adenosyl-L-homocysteine. It catalyses the reaction adenosine(37) in tRNA + 2 reduced [2Fe-2S]-[ferredoxin] + 2 S-adenosyl-L-methionine = 2-methyladenosine(37) in tRNA + 5'-deoxyadenosine + L-methionine + 2 oxidized [2Fe-2S]-[ferredoxin] + S-adenosyl-L-homocysteine. Functionally, specifically methylates position 2 of adenine 2503 in 23S rRNA and position 2 of adenine 37 in tRNAs. m2A2503 modification seems to play a crucial role in the proofreading step occurring at the peptidyl transferase center and thus would serve to optimize ribosomal fidelity. The polypeptide is Dual-specificity RNA methyltransferase RlmN (Acidiphilium cryptum (strain JF-5)).